Reading from the N-terminus, the 266-residue chain is MAASALDSAWEGLTGSFTEFQLATVVTFLLHETVFFLSGLPSLLFERFGLFAKYKIQKKSNTPSYQNRCVLRLILYHVCVNLPVMVLSYPAFKFMGLRSSLPLPHWTVIVSQVLFYFVLEDFIFYWGHRALHTKWLYKHVHSVHHEYATPFGLTSEYAHPAEILFLGFATIVGPALTGPHLFTLWLWMVLRVLETVEAHSGYHFPWSPSNFLPLYGGSDFHDYHHRVLYTKSGNYASTFVYMDWLFGTDKDYRNAKAIEEKDGKHL.

4 helical membrane-spanning segments follow: residues 25 to 45 (VVTF…SLLF), 74 to 94 (ILYH…AFKF), 106 to 126 (WTVI…IFYW), and 163 to 183 (ILFL…HLFT). Residues 113-248 (VLFYFVLEDF…FVYMDWLFGT (136 aa)) enclose the Fatty acid hydroxylase domain.

Belongs to the sterol desaturase family. As to quaternary structure, homodimer.

The protein resides in the endoplasmic reticulum membrane. The catalysed reaction is a long-chain fatty aldehyde + 2 NADPH + O2 + H(+) = a long-chain alkane + formate + 2 NADP(+) + H2O. Functionally, aldehyde decarbonylase involved in the conversion of aldehydes to alkanes. Core component of a very-long-chain alkane synthesis complex. The polypeptide is Very-long-chain aldehyde decarbonylase GL1-11 (Oryza sativa subsp. indica (Rice)).